The chain runs to 206 residues: uncharacterized protein (206 aa).

The MurNAc-LAA domain maps to 32 to 201 (VYIDAGHGGE…AADAIVNGID (170 aa)).

It belongs to the N-acetylmuramoyl-L-alanine amidase 3 family.

This is an uncharacterized protein from Bacillus subtilis (strain 168).